Reading from the N-terminus, the 459-residue chain is Sorting nexin-8 (459 aa).

The tract at residues 1–37 (MTGRAMDPLPSPAVAAAAEAEADEEADPPATGPRTSQ) is disordered. The 109-residue stretch at 68–176 (AKDTVQVELI…KLFLSFSGSD (109 aa)) folds into the PX domain. Positions 104, 130, and 143 each coordinate a 1,2-diacyl-sn-glycero-3-phospho-(1D-myo-inositol-3-phosphate). Thr-446 is subject to Phosphothreonine. Ser-450 is modified (phosphoserine).

The protein belongs to the sorting nexin family.

The protein localises to the early endosome membrane. In terms of biological role, may be involved in several stages of intracellular trafficking. May play a role in intracellular protein transport from early endosomes to the trans-Golgi network. The polypeptide is Sorting nexin-8 (Snx8) (Mus musculus (Mouse)).